Here is a 99-residue protein sequence, read N- to C-terminus: NADH-quinone oxidoreductase subunit K (99 aa).

Transmembrane regions (helical) follow at residues Pro3–Val23, Ile28–Phe48, and Val59–Ile79.

This sequence belongs to the complex I subunit 4L family. As to quaternary structure, NDH-1 is composed of 14 different subunits. Subunits NuoA, H, J, K, L, M, N constitute the membrane sector of the complex.

The protein resides in the cell membrane. The catalysed reaction is a quinone + NADH + 5 H(+)(in) = a quinol + NAD(+) + 4 H(+)(out). Its function is as follows. NDH-1 shuttles electrons from NADH, via FMN and iron-sulfur (Fe-S) centers, to quinones in the respiratory chain. The immediate electron acceptor for the enzyme in this species is believed to be a menaquinone. Couples the redox reaction to proton translocation (for every two electrons transferred, four hydrogen ions are translocated across the cytoplasmic membrane), and thus conserves the redox energy in a proton gradient. The chain is NADH-quinone oxidoreductase subunit K from Frankia alni (strain DSM 45986 / CECT 9034 / ACN14a).